A 363-amino-acid polypeptide reads, in one-letter code: MAP kinase kinase skh1/pek1 (363 aa).

Residues 79–343 enclose the Protein kinase domain; that stretch reads ILYMNSLGEG…PQKMLTHPWV (265 aa). ATP contacts are provided by residues 85 to 93 and Lys108; that span reads LGEGVSGSV. Residue Asp206 is the Proton acceptor of the active site. At Ser234 the chain carries Phosphoserine. Thr238 is modified (phosphothreonine).

Belongs to the protein kinase superfamily. STE Ser/Thr protein kinase family. MAP kinase kinase subfamily.

The enzyme catalyses L-seryl-[protein] + ATP = O-phospho-L-seryl-[protein] + ADP + H(+). It catalyses the reaction L-threonyl-[protein] + ATP = O-phospho-L-threonyl-[protein] + ADP + H(+). It carries out the reaction L-tyrosyl-[protein] + ATP = O-phospho-L-tyrosyl-[protein] + ADP + H(+). With respect to regulation, activated by mkh1. Its function is as follows. Involved in the mkh1 signal transduction pathway that plays a role in cell wall integrity. Activates spm1/pmk1 via phosphorylation. This Schizosaccharomyces pombe (strain 972 / ATCC 24843) (Fission yeast) protein is MAP kinase kinase skh1/pek1 (skh1).